A 113-amino-acid chain; its full sequence is Large ribosomal subunit protein eL31 (113 aa).

This sequence belongs to the eukaryotic ribosomal protein eL31 family. Component of the large ribosomal subunit (LSU). Mature yeast ribosomes consist of a small (40S) and a large (60S) subunit. The 40S small subunit contains 1 molecule of ribosomal RNA (18S rRNA) and at least 33 different proteins. The large 60S subunit contains 3 rRNA molecules (25S, 5.8S and 5S rRNA) and at least 46 different proteins.

The protein localises to the cytoplasm. Its function is as follows. Component of the ribosome, a large ribonucleoprotein complex responsible for the synthesis of proteins in the cell. The small ribosomal subunit (SSU) binds messenger RNAs (mRNAs) and translates the encoded message by selecting cognate aminoacyl-transfer RNA (tRNA) molecules. The large subunit (LSU) contains the ribosomal catalytic site termed the peptidyl transferase center (PTC), which catalyzes the formation of peptide bonds, thereby polymerizing the amino acids delivered by tRNAs into a polypeptide chain. The nascent polypeptides leave the ribosome through a tunnel in the LSU and interact with protein factors that function in enzymatic processing, targeting, and the membrane insertion of nascent chains at the exit of the ribosomal tunnel. This Schizosaccharomyces pombe (strain 972 / ATCC 24843) (Fission yeast) protein is Large ribosomal subunit protein eL31 (rpl31).